The chain runs to 492 residues: N-succinylglutamate 5-semialdehyde dehydrogenase (492 aa).

220–225 provides a ligand contact to NAD(+); it reads GSAGTG. Active-site residues include glutamate 243 and cysteine 277.

The protein belongs to the aldehyde dehydrogenase family. AstD subfamily.

The catalysed reaction is N-succinyl-L-glutamate 5-semialdehyde + NAD(+) + H2O = N-succinyl-L-glutamate + NADH + 2 H(+). Its pathway is amino-acid degradation; L-arginine degradation via AST pathway; L-glutamate and succinate from L-arginine: step 4/5. Functionally, catalyzes the NAD-dependent reduction of succinylglutamate semialdehyde into succinylglutamate. This chain is N-succinylglutamate 5-semialdehyde dehydrogenase, found in Cronobacter sakazakii (strain ATCC BAA-894) (Enterobacter sakazakii).